The sequence spans 1097 residues: DNA-directed RNA polymerase subunit beta (1097 aa).

The disordered stretch occupies residues 1072–1097 (QDVNPRRSTPSRPTYESLGVADYDED).

The protein belongs to the RNA polymerase beta chain family. In cyanobacteria the RNAP catalytic core is composed of 2 alpha, 1 beta, 1 beta', 1 gamma and 1 omega subunit. When a sigma factor is associated with the core the holoenzyme is formed, which can initiate transcription.

It carries out the reaction RNA(n) + a ribonucleoside 5'-triphosphate = RNA(n+1) + diphosphate. Functionally, DNA-dependent RNA polymerase catalyzes the transcription of DNA into RNA using the four ribonucleoside triphosphates as substrates. The chain is DNA-directed RNA polymerase subunit beta from Parasynechococcus marenigrum (strain WH8102).